A 494-amino-acid chain; its full sequence is Glutamate decarboxylase 2 (494 aa).

Lysine 276 carries the N6-(pyridoxal phosphate)lysine modification. A calmodulin-binding region spans residues 463 to 494; that stretch reads VKEKKMEKEILMEVIVGWRKFVKERKKMNGVC.

This sequence belongs to the group II decarboxylase family. In terms of assembly, homohexamer. Interacts with calmodulin. Pyridoxal 5'-phosphate is required as a cofactor. As to expression, expressed in roots, inflorescence stems, flowers, siliques and leaves.

It carries out the reaction L-glutamate + H(+) = 4-aminobutanoate + CO2. Up-regulated by calmodulin binding at physiological pH. Functionally, catalyzes the conversion of glutamate to 4-aminobutanoate (GABA). The calmodulin-binding is calcium-dependent and it is proposed to directly or indirectly form a calcium regulated control of GABA biosynthesis. This is Glutamate decarboxylase 2 (GAD2) from Arabidopsis thaliana (Mouse-ear cress).